The sequence spans 663 residues: Ankyrin repeat and SAM domain-containing protein 3 (663 aa).

Residues 1–421 (MSELSDEASE…PGSEPQAEKS (421 aa)) form an interaction with NEK7 region. A phosphoserine mark is found at Ser-2 and Ser-5. 6 ANK repeats span residues 34–64 (DVPL…DLNK), 68–97 (GGWT…SVNV), 101–130 (EGQT…ELEM), 134–163 (QGWT…NANV), 168–197 (YGFT…KVDT), and 201–220 (SGAT…IVAL). Asn-96 is modified (3-hydroxyasparagine). Phosphoserine is present on residues Ser-201, Ser-225, Ser-243, Ser-244, and Ser-245. Disordered stretches follow at residues 242–261 (LSSS…CRKK) and 278–425 (TGLG…PYSG). Thr-318 is subject to Phosphothreonine. Ser-319 carries the phosphoserine modification. Basic and acidic residues predominate over residues 322–337 (NERDVESSSSSSREEP). Phosphoserine is present on residues Ser-366, Ser-369, and Ser-373. Residues 378 to 395 (KSSVRKQTRTYLKNKSRH) show a composition bias toward basic residues. Positions 424–487 (SGPQDLATLL…TSAIARWHSS (64 aa)) constitute an SAM domain. Positions 500–575 (ADRLEAEMQE…AALVLDQLRA (76 aa)) form a coiled coil. Ser-540 bears the Phosphoserine mark. Disordered regions lie at residues 585–604 (KQHH…PADS) and 637–663 (AEPG…SDVG). Residues 641-651 (ETTDAEWEEME) are compositionally biased toward acidic residues. The segment covering 654–663 (IARRDDSDVG) has biased composition (basic and acidic residues).

As to quaternary structure, homooligomer. Interacts (via SAM domain) with ANKS6 (via SAM domain). Interacts with BICC1. Interacts with NPHP1. Interacts with NEK8. Interacts with HIF1AN. Interacts with NEK7; this interaction alters the subcellular distribution of NEK7 by preventing its nuclear translocation. Post-translationally, hydroxylated at Asn-96, most probably by HIF1AN. Phosphorylations at Ser-5, Ser-225, Thr-318, Ser-319, Ser-366 and Ser-369 occur in a NEK7-dependent manner. In terms of processing, polyubiquitinated.

It is found in the cell projection. It localises to the cilium. Its subcellular location is the cytoplasm. In terms of biological role, may be involved in vasopressin signaling in the kidney. In Rattus norvegicus (Rat), this protein is Ankyrin repeat and SAM domain-containing protein 3 (Anks3).